Here is a 545-residue protein sequence, read N- to C-terminus: CTP synthase (545 aa).

Positions 1-266 are amidoligase domain; it reads MTTNYIFVTG…DDYICKRFSL (266 aa). Ser14 is a binding site for CTP. Residue Ser14 participates in UTP binding. ATP is bound by residues 15-20 and Asp72; that span reads SLGKGI. Mg(2+)-binding residues include Asp72 and Glu140. Residues 147–149, 187–192, and Lys223 each bind CTP; these read DIE and KTKPTQ. Residues 187–192 and Lys223 contribute to the UTP site; that span reads KTKPTQ. 239–241 provides a ligand contact to ATP; sequence KDV. In terms of domain architecture, Glutamine amidotransferase type-1 spans 291 to 542; sequence TIGMVGKYIE…VKAASEFQKR (252 aa). Gly352 lines the L-glutamine pocket. Catalysis depends on Cys379, which acts as the Nucleophile; for glutamine hydrolysis. L-glutamine contacts are provided by residues 380 to 383, Glu403, and Arg470; that span reads LGMQ. Residues His515 and Glu517 contribute to the active site.

It belongs to the CTP synthase family. As to quaternary structure, homotetramer.

It carries out the reaction UTP + L-glutamine + ATP + H2O = CTP + L-glutamate + ADP + phosphate + 2 H(+). The catalysed reaction is L-glutamine + H2O = L-glutamate + NH4(+). It catalyses the reaction UTP + NH4(+) + ATP = CTP + ADP + phosphate + 2 H(+). The protein operates within pyrimidine metabolism; CTP biosynthesis via de novo pathway; CTP from UDP: step 2/2. With respect to regulation, allosterically activated by GTP, when glutamine is the substrate; GTP has no effect on the reaction when ammonia is the substrate. The allosteric effector GTP functions by stabilizing the protein conformation that binds the tetrahedral intermediate(s) formed during glutamine hydrolysis. Inhibited by the product CTP, via allosteric rather than competitive inhibition. Functionally, catalyzes the ATP-dependent amination of UTP to CTP with either L-glutamine or ammonia as the source of nitrogen. Regulates intracellular CTP levels through interactions with the four ribonucleotide triphosphates. The polypeptide is CTP synthase (Escherichia coli O127:H6 (strain E2348/69 / EPEC)).